The following is a 737-amino-acid chain: Cellulose synthase-like protein E1 (737 aa).

The next 2 helical transmembrane spans lie at 26–45 (AVYRVQAATVAAGILLVLYY) and 58–78 (AAWLGMAAAELWFAVYWVIAQ). Residues D146 and D451 contribute to the active site. 5 helical membrane-spanning segments follow: residues 528–548 (LWAANSLPTLYYVVIPSLGLV), 551–571 (TPLFPQIMSPWATPFIYVFCV), 654–674 (VIIATVALLNFVCLVGGLSQI), 683–703 (WNVFLPQAILCGMIVIINMPI), and 716–736 (IPTAVTLASIGFVMLAFLVPI).

It belongs to the glycosyltransferase 2 family. Plant cellulose synthase-like E subfamily.

It localises to the golgi apparatus membrane. Functionally, thought to be a Golgi-localized beta-glycan synthase that polymerize the backbones of noncellulosic polysaccharides (hemicelluloses) of plant cell wall. The protein is Cellulose synthase-like protein E1 (CSLE1) of Oryza sativa subsp. japonica (Rice).